A 453-amino-acid chain; its full sequence is Bifunctional protein GlmU (453 aa).

A pyrophosphorylase region spans residues 1-225 (MNIVILAAGT…DWETLGVNSK (225 aa)). Residues 6-9 (LAAG), Lys-20, Gln-71, 76-77 (GT), 98-100 (YGD), Gly-135, Glu-150, Asn-165, and Asn-223 each bind UDP-N-acetyl-alpha-D-glucosamine. Position 100 (Asp-100) interacts with Mg(2+). Asn-223 contacts Mg(2+). Residues 226 to 246 (AQLAELERIHQRNVADALLVE) are linker. Residues 247–453 (GVTLADPARV…GYVRPVKKKS (207 aa)) are N-acetyltransferase. UDP-N-acetyl-alpha-D-glucosamine-binding residues include Arg-329 and Lys-347. The Proton acceptor role is filled by His-359. UDP-N-acetyl-alpha-D-glucosamine contacts are provided by Tyr-362 and Asn-373. Acetyl-CoA contacts are provided by residues Ala-376, 382–383 (NY), Ser-401, and Ala-419.

In the N-terminal section; belongs to the N-acetylglucosamine-1-phosphate uridyltransferase family. This sequence in the C-terminal section; belongs to the transferase hexapeptide repeat family. Homotrimer. The cofactor is Mg(2+).

The protein localises to the cytoplasm. The catalysed reaction is alpha-D-glucosamine 1-phosphate + acetyl-CoA = N-acetyl-alpha-D-glucosamine 1-phosphate + CoA + H(+). It catalyses the reaction N-acetyl-alpha-D-glucosamine 1-phosphate + UTP + H(+) = UDP-N-acetyl-alpha-D-glucosamine + diphosphate. The protein operates within nucleotide-sugar biosynthesis; UDP-N-acetyl-alpha-D-glucosamine biosynthesis; N-acetyl-alpha-D-glucosamine 1-phosphate from alpha-D-glucosamine 6-phosphate (route II): step 2/2. Its pathway is nucleotide-sugar biosynthesis; UDP-N-acetyl-alpha-D-glucosamine biosynthesis; UDP-N-acetyl-alpha-D-glucosamine from N-acetyl-alpha-D-glucosamine 1-phosphate: step 1/1. It participates in bacterial outer membrane biogenesis; LPS lipid A biosynthesis. Catalyzes the last two sequential reactions in the de novo biosynthetic pathway for UDP-N-acetylglucosamine (UDP-GlcNAc). The C-terminal domain catalyzes the transfer of acetyl group from acetyl coenzyme A to glucosamine-1-phosphate (GlcN-1-P) to produce N-acetylglucosamine-1-phosphate (GlcNAc-1-P), which is converted into UDP-GlcNAc by the transfer of uridine 5-monophosphate (from uridine 5-triphosphate), a reaction catalyzed by the N-terminal domain. This Burkholderia vietnamiensis (strain G4 / LMG 22486) (Burkholderia cepacia (strain R1808)) protein is Bifunctional protein GlmU.